The following is a 769-amino-acid chain: Glutathione biosynthesis bifunctional protein GshAB (769 aa).

The segment at methionine 1 to isoleucine 347 is glutamate--cysteine ligase. In terms of domain architecture, ATP-grasp spans lysine 514–phenylalanine 768. ATP is bound at residue serine 541 to arginine 599. Mg(2+) contacts are provided by aspartate 721, glutamate 738, and asparagine 740. Residues aspartate 721, glutamate 738, and asparagine 740 each contribute to the Mn(2+) site.

It in the N-terminal section; belongs to the glutamate--cysteine ligase type 1 family. Type 2 subfamily. Monomer. The cofactor is Mg(2+). Requires Mn(2+) as cofactor.

The enzyme catalyses L-cysteine + L-glutamate + ATP = gamma-L-glutamyl-L-cysteine + ADP + phosphate + H(+). The catalysed reaction is gamma-L-glutamyl-L-cysteine + glycine + ATP = glutathione + ADP + phosphate + H(+). Its pathway is sulfur metabolism; glutathione biosynthesis; glutathione from L-cysteine and L-glutamate: step 1/2. It participates in sulfur metabolism; glutathione biosynthesis; glutathione from L-cysteine and L-glutamate: step 2/2. Synthesizes glutathione from L-glutamate and L-cysteine via gamma-L-glutamyl-L-cysteine. This is Glutathione biosynthesis bifunctional protein GshAB from Listeria innocua serovar 6a (strain ATCC BAA-680 / CLIP 11262).